The primary structure comprises 317 residues: Acetyl-coenzyme A carboxylase carboxyl transferase subunit alpha (317 aa).

Positions 37–291 (KLQEKVDKLL…GNAIEDALDD (255 aa)) constitute a CoA carboxyltransferase C-terminal domain.

Belongs to the AccA family. In terms of assembly, acetyl-CoA carboxylase is a heterohexamer composed of biotin carboxyl carrier protein (AccB), biotin carboxylase (AccC) and two subunits each of ACCase subunit alpha (AccA) and ACCase subunit beta (AccD).

The protein resides in the cytoplasm. It catalyses the reaction N(6)-carboxybiotinyl-L-lysyl-[protein] + acetyl-CoA = N(6)-biotinyl-L-lysyl-[protein] + malonyl-CoA. The protein operates within lipid metabolism; malonyl-CoA biosynthesis; malonyl-CoA from acetyl-CoA: step 1/1. Component of the acetyl coenzyme A carboxylase (ACC) complex. First, biotin carboxylase catalyzes the carboxylation of biotin on its carrier protein (BCCP) and then the CO(2) group is transferred by the carboxyltransferase to acetyl-CoA to form malonyl-CoA. The protein is Acetyl-coenzyme A carboxylase carboxyl transferase subunit alpha of Rhodospirillum centenum (strain ATCC 51521 / SW).